Here is a 441-residue protein sequence, read N- to C-terminus: 5-methylthioadenosine/S-adenosylhomocysteine deaminase (441 aa).

Positions 70 and 72 each coordinate Zn(2+). Positions 99 and 191 each coordinate substrate. Residue His218 participates in Zn(2+) binding. Residues Glu221 and Asp306 each coordinate substrate. Asp306 lines the Zn(2+) pocket.

The protein belongs to the metallo-dependent hydrolases superfamily. MTA/SAH deaminase family. It depends on Zn(2+) as a cofactor.

The enzyme catalyses S-adenosyl-L-homocysteine + H2O + H(+) = S-inosyl-L-homocysteine + NH4(+). The catalysed reaction is S-methyl-5'-thioadenosine + H2O + H(+) = S-methyl-5'-thioinosine + NH4(+). Functionally, catalyzes the deamination of 5-methylthioadenosine and S-adenosyl-L-homocysteine into 5-methylthioinosine and S-inosyl-L-homocysteine, respectively. Is also able to deaminate adenosine. The polypeptide is 5-methylthioadenosine/S-adenosylhomocysteine deaminase (Lawsonia intracellularis (strain PHE/MN1-00)).